The chain runs to 437 residues: Trigger factor (437 aa).

The 87-residue stretch at 174-260 folds into the PPIase FKBP-type domain; that stretch reads GDFVQISFEG…VKSLKKKIFP (87 aa).

This sequence belongs to the FKBP-type PPIase family. Tig subfamily.

The protein resides in the cytoplasm. It catalyses the reaction [protein]-peptidylproline (omega=180) = [protein]-peptidylproline (omega=0). Involved in protein export. Acts as a chaperone by maintaining the newly synthesized protein in an open conformation. Functions as a peptidyl-prolyl cis-trans isomerase. The protein is Trigger factor of Koribacter versatilis (strain Ellin345).